A 416-amino-acid chain; its full sequence is WD repeat-containing protein JIP5 (416 aa).

3 WD repeats span residues 9-48, 62-101, and 112-151; these read PLSS…ENGK, RHKG…VEWK, and GFQV…TEVS. A disordered region spans residues 149–183; sequence EVSARPQQTHHPHDDYVSSLTPLPPSETSTSGYSK. The span at 166 to 179 shows a compositional bias: low complexity; that stretch reads SSLTPLPPSETSTS. 3 WD repeats span residues 214 to 255, 264 to 308, and 309 to 348; these read ISSS…DQDE, DGGE…ISEL, and SHDD…EEGN. Composition is skewed to acidic residues over residues 343 to 359 and 374 to 383; these read SDEE…DIEN and SDEEEDSDDD. Positions 343–416 are disordered; the sequence is SDEEGNDDES…VHVMAFKGLD (74 aa). The span at 389–400 shows a compositional bias: basic residues; that stretch reads KGKRKKRKRGKG.

Belongs to the WD repeat WDR55 family.

The protein resides in the nucleus. It is found in the nucleolus. This Coccidioides immitis (strain RS) (Valley fever fungus) protein is WD repeat-containing protein JIP5 (JIP5).